A 280-amino-acid chain; its full sequence is Dopamine receptor-interacting protein 1 (280 aa).

As to quaternary structure, interacts with DRD1, the dopamine D1 receptor.

Its function is as follows. Could be a regulator of the dopamine receptor signaling pathway. In Bos taurus (Bovine), this protein is Dopamine receptor-interacting protein 1 (DORIP1).